A 369-amino-acid polypeptide reads, in one-letter code: Glutamate 5-kinase (369 aa).

Residue K11 participates in ATP binding. Substrate-binding residues include S51, D138, and N150. ATP contacts are provided by residues 170–171 (TD) and 212–218 (TGGMATK). The region spanning 277 to 355 (KGSIVIDEGA…QDIYAVLGYE (79 aa)) is the PUA domain.

This sequence belongs to the glutamate 5-kinase family.

The protein localises to the cytoplasm. The enzyme catalyses L-glutamate + ATP = L-glutamyl 5-phosphate + ADP. The protein operates within amino-acid biosynthesis; L-proline biosynthesis; L-glutamate 5-semialdehyde from L-glutamate: step 1/2. Its function is as follows. Catalyzes the transfer of a phosphate group to glutamate to form L-glutamate 5-phosphate. This is Glutamate 5-kinase from Aliivibrio fischeri (strain ATCC 700601 / ES114) (Vibrio fischeri).